Here is a 360-residue protein sequence, read N- to C-terminus: Phospho-N-acetylmuramoyl-pentapeptide-transferase (360 aa).

The next 10 membrane-spanning stretches (helical) occupy residues 24–44 (RAVM…PWTI), 69–89 (GTPT…TLLW), 92–112 (WANP…ALGF), 133–153 (MVWQ…LAAN), 158–178 (ILIV…GFLV), 199–219 (GLAT…AYVS), 239–259 (VAIF…FNAY), 263–283 (VFMG…VAVI), 288–308 (FVLV…MLQV), and 337–357 (QVVV…LSTL).

The protein belongs to the glycosyltransferase 4 family. MraY subfamily. Requires Mg(2+) as cofactor.

The protein localises to the cell inner membrane. The catalysed reaction is UDP-N-acetyl-alpha-D-muramoyl-L-alanyl-gamma-D-glutamyl-meso-2,6-diaminopimeloyl-D-alanyl-D-alanine + di-trans,octa-cis-undecaprenyl phosphate = di-trans,octa-cis-undecaprenyl diphospho-N-acetyl-alpha-D-muramoyl-L-alanyl-D-glutamyl-meso-2,6-diaminopimeloyl-D-alanyl-D-alanine + UMP. Its pathway is cell wall biogenesis; peptidoglycan biosynthesis. In terms of biological role, catalyzes the initial step of the lipid cycle reactions in the biosynthesis of the cell wall peptidoglycan: transfers peptidoglycan precursor phospho-MurNAc-pentapeptide from UDP-MurNAc-pentapeptide onto the lipid carrier undecaprenyl phosphate, yielding undecaprenyl-pyrophosphoryl-MurNAc-pentapeptide, known as lipid I. This chain is Phospho-N-acetylmuramoyl-pentapeptide-transferase, found in Neisseria meningitidis serogroup C (strain 053442).